A 375-amino-acid chain; its full sequence is Circadian-associated transcriptional repressor (375 aa).

The span at 1 to 32 (MDSPSSVSSYSSSSLSPSFSTSSVNSDFSFPS) shows a compositional bias: low complexity. 3 disordered regions span residues 1 to 102 (MDSP…LNTQ), 192 to 218 (KSSS…AASP), and 351 to 375 (DREM…DPQP). Residues 33–46 (DNEREGKGTHELRP) show a composition bias toward basic and acidic residues.

In terms of assembly, interacts with BMAL1, PER2, CRY2, BHLHE41, HDAC1 NR3C1.

It localises to the nucleus. It is found in the PML body. In terms of biological role, transcriptional repressor which forms a negative regulatory component of the circadian clock and acts independently of the circadian transcriptional repressors: CRY1, CRY2 and BHLHE41. In a histone deacetylase-dependent manner represses the transcriptional activator activity of the CLOCK-BMAL1 heterodimer. Abrogates the interaction of BMAL1 with the transcriptional coactivator CREBBP and can repress the histone acetyl-transferase activity of the CLOCK-BMAL1 heterodimer, reducing histone acetylation of its target genes. Rhythmically binds the E-box elements (5'-CACGTG-3') on circadian gene promoters and its occupancy shows circadian oscillation antiphasic to BMAL1. Interacts with the glucocorticoid receptor (NR3C1) and contributes to the repressive function in the glucocorticoid response. This is Circadian-associated transcriptional repressor (Ciart) from Mus musculus (Mouse).